We begin with the raw amino-acid sequence, 538 residues long: Bifunctional purine biosynthesis protein PurH (538 aa).

Residues 8–158 (IPAPDLVPVR…KNHAYVAIVT (151 aa)) enclose the MGS-like domain.

This sequence belongs to the PurH family.

It carries out the reaction (6R)-10-formyltetrahydrofolate + 5-amino-1-(5-phospho-beta-D-ribosyl)imidazole-4-carboxamide = 5-formamido-1-(5-phospho-D-ribosyl)imidazole-4-carboxamide + (6S)-5,6,7,8-tetrahydrofolate. The catalysed reaction is IMP + H2O = 5-formamido-1-(5-phospho-D-ribosyl)imidazole-4-carboxamide. It functions in the pathway purine metabolism; IMP biosynthesis via de novo pathway; 5-formamido-1-(5-phospho-D-ribosyl)imidazole-4-carboxamide from 5-amino-1-(5-phospho-D-ribosyl)imidazole-4-carboxamide (10-formyl THF route): step 1/1. The protein operates within purine metabolism; IMP biosynthesis via de novo pathway; IMP from 5-formamido-1-(5-phospho-D-ribosyl)imidazole-4-carboxamide: step 1/1. The sequence is that of Bifunctional purine biosynthesis protein PurH from Mesorhizobium japonicum (strain LMG 29417 / CECT 9101 / MAFF 303099) (Mesorhizobium loti (strain MAFF 303099)).